We begin with the raw amino-acid sequence, 352 residues long: Ferrochelatase (352 aa).

Fe cation is bound by residues His222 and Glu303.

It belongs to the ferrochelatase family.

It is found in the cytoplasm. It carries out the reaction heme b + 2 H(+) = protoporphyrin IX + Fe(2+). It functions in the pathway porphyrin-containing compound metabolism; protoheme biosynthesis; protoheme from protoporphyrin-IX: step 1/1. Functionally, catalyzes the ferrous insertion into protoporphyrin IX. This chain is Ferrochelatase, found in Brucella canis (strain ATCC 23365 / NCTC 10854 / RM-666).